The primary structure comprises 355 residues: MYYNNDVSLCSNLDKLIKPSSVKVVSDDSSEKSDIVLEPLESGFALTLGNALRRVMLSSLKGSAVYGIKIEGVTHEFTSIQGVREDVTDIVLNMGMLRCKLNGASNKCLNLNAKGPCQVLAGMIETDDQCSIVNKDLLICTLGQNVELNMTIYVASGKGYLPVTKYKENELLKLMSEQDLIGFIPVNALYSPVNRVSYRVENSRVGQVTDKDKLILSIETDGTISPSQAVDSAARILQEQLQPFISSDVSYKKSQVSSSSGAKDLGYDPVLLRKVDEMELSVRSHNCLKNENITYIGDLVQKTEGEMLRTANFGRKSLNEIKAVLTNFGLSLGMNVLNWPPKDIDELAKQHTDED.

The segment at M1–D248 is alpha N-terminal domain (alpha-NTD). The alpha C-terminal domain (alpha-CTD) stretch occupies residues Y267–D355.

Belongs to the RNA polymerase alpha chain family. In terms of assembly, homodimer. The RNAP catalytic core consists of 2 alpha, 1 beta, 1 beta' and 1 omega subunit. When a sigma factor is associated with the core the holoenzyme is formed, which can initiate transcription.

It carries out the reaction RNA(n) + a ribonucleoside 5'-triphosphate = RNA(n+1) + diphosphate. Functionally, DNA-dependent RNA polymerase catalyzes the transcription of DNA into RNA using the four ribonucleoside triphosphates as substrates. In Wolbachia pipientis wMel, this protein is DNA-directed RNA polymerase subunit alpha.